A 580-amino-acid chain; its full sequence is MSEITTTDAQAQPEKKDFIRQIIREDLAHGTHTHIHTRFPPEPNGYLHIGHAKAICLDFGVAAEFGGHCTLRMDDTNPSKEDPAFAAAIQEDVSWLGFHWNALRHTSDYFEVLYLAAEKLIADGKAYVCDLNSQQVREYRGTLTEAGRPSPWRERSPDENLELFRQMRAGTFPDGTRTLRAKIDMASGNINLRDPALYRIKHVEHQNTGNTWPIYPMYDFAHALSDAIEGITHSLCTLEFEDHRPLYDWCINHVDLPNNSHLLKPLLDKGFPQEPSQPRQIEFSRLNINYTVMSKRKLTALVDEKLVEGWDDPRMYTLQGLRRRGYTPAAMRLFVERIGISKQNSIIDFSVLENCLRENLDTIAPRRMATIAPMKLVLTNLAEDHEEQLIFPNHPKDDTQGTRTVPFSRELWIERDDFSEAPPKGWKRLIPGGEVRLRGAGIARIDEVVKNAEGHVIALHGWLDPTSRPGMEGAHRKVKGTIHWVSAPHAVAAEIRLYDRLFSIEKPDDNTDGKTYRDFLNPDSKRVVHGYIEPAAAQTAPEHAFQFERLGYFVTDRHDHDATHPVFNRSVTLRDTWQRD.

The 'HIGH' region motif lies at 41 to 51; that stretch reads PEPNGYLHIGH. Residues 42–44 and 48–54 each bind ATP; these read EPN and HIGHAKA. The L-glutamine site is built by aspartate 74 and tyrosine 218. ATP contacts are provided by residues threonine 237, 285 to 286, and 293 to 295; these read RL and MSK. The short motif at 292-296 is the 'KMSKS' region element; it reads VMSKR.

It belongs to the class-I aminoacyl-tRNA synthetase family. Monomer.

Its subcellular location is the cytoplasm. The catalysed reaction is tRNA(Gln) + L-glutamine + ATP = L-glutaminyl-tRNA(Gln) + AMP + diphosphate. This Xylella fastidiosa (strain Temecula1 / ATCC 700964) protein is Glutamine--tRNA ligase.